Reading from the N-terminus, the 416-residue chain is TNF receptor-associated factor 1 (416 aa).

Residues 1-24 form a disordered region; the sequence is MASSSGSSPRPAPDENEFPFGCPP. Serine 146 is subject to Phosphoserine. Positions 182–264 form a coiled coil; that stretch reads MKEKLLAELE…QSLRLMEEAS (83 aa). Residues lysine 185 and lysine 193 each participate in a glycyl lysine isopeptide (Lys-Gly) (interchain with G-Cter in ubiquitin) cross-link. The MATH domain occupies 266–412; sequence DGTFLWKITN…DDTMFLKCIV (147 aa).

Homotrimer. Heterotrimer with TRAF2. Interacts with TNFRSF1A/TNFR1, TNFRSF1B/TNFR2, TNFRSF4, TNFRSF5/CD40, TNFRSF8/CD30, TNFRSF9/CD137, TNFRSF11A/RANK, TNFRSF13C, TNFRSF18/AITR, TNFRSF17/BCMA, TNFRSF19/TROY, TNFRSF19L/RELT, XEDAR, EDAR, Epstein-Barr virus BNFL1/LMP-1, TANK/ITRAF, TRAIP and RIPK2. Interacts with BIRC2 and BIRC3 N-terminus; a single BIRC2 or BIRC3 molecule interacts with a heterotrimer formed by TRAF1 and TRAF2. Interacts with NFATC2IP, TRAFD1 and with HIVEP3. Interacts with MAP3K14. Interacts with GPS2. In terms of processing, polyubiquitinated by BIRC2 and/or BIRC3, leading to its subsequent proteasomal degradation. Ubiquitinated by the SCF(FBXL2) complex, leading to its degradation by the proteasome.

In terms of biological role, adapter molecule that regulates the activation of NF-kappa-B and JNK. Plays a role in the regulation of cell survival and apoptosis. The heterotrimer formed by TRAF1 and TRAF2 is part of a E3 ubiquitin-protein ligase complex that promotes ubiquitination of target proteins, such as MAP3K14. The TRAF1/TRAF2 complex recruits the antiapoptotic E3 protein-ubiquitin ligases BIRC2 and BIRC3 to TNFRSF1B/TNFR2. This is TNF receptor-associated factor 1 (TRAF1) from Homo sapiens (Human).